Consider the following 618-residue polypeptide: Dihydroxy-acid dehydratase (618 aa).

D81 is a binding site for Mg(2+). C122 is a [2Fe-2S] cluster binding site. Residues D123 and K124 each contribute to the Mg(2+) site. Residue K124 is modified to N6-carboxylysine. C195 is a binding site for [2Fe-2S] cluster. E492 contributes to the Mg(2+) binding site. S518 serves as the catalytic Proton acceptor.

This sequence belongs to the IlvD/Edd family. Homodimer. [2Fe-2S] cluster is required as a cofactor. It depends on Mg(2+) as a cofactor.

The catalysed reaction is (2R)-2,3-dihydroxy-3-methylbutanoate = 3-methyl-2-oxobutanoate + H2O. It catalyses the reaction (2R,3R)-2,3-dihydroxy-3-methylpentanoate = (S)-3-methyl-2-oxopentanoate + H2O. The protein operates within amino-acid biosynthesis; L-isoleucine biosynthesis; L-isoleucine from 2-oxobutanoate: step 3/4. It participates in amino-acid biosynthesis; L-valine biosynthesis; L-valine from pyruvate: step 3/4. Its function is as follows. Functions in the biosynthesis of branched-chain amino acids. Catalyzes the dehydration of (2R,3R)-2,3-dihydroxy-3-methylpentanoate (2,3-dihydroxy-3-methylvalerate) into 2-oxo-3-methylpentanoate (2-oxo-3-methylvalerate) and of (2R)-2,3-dihydroxy-3-methylbutanoate (2,3-dihydroxyisovalerate) into 2-oxo-3-methylbutanoate (2-oxoisovalerate), the penultimate precursor to L-isoleucine and L-valine, respectively. This Zymomonas mobilis subsp. mobilis (strain ATCC 31821 / ZM4 / CP4) protein is Dihydroxy-acid dehydratase.